Reading from the N-terminus, the 153-residue chain is Coiled-coil-helix-coiled-coil-helix domain-containing protein 2 (153 aa).

Disordered stretches follow at residues 1–51 (MPRG…AAPR) and 78–106 (HAITGGFSGGGSAEPAKPDITYQEPQGAQ). Over residues 14–51 (PPASRAPQMRAAPRRAPAAQPPAAAAPSAVGSPAAAPR) the composition is skewed to low complexity. The 41-residue stretch at 113 to 153 (FGPCSLEIKQFLECAQNQSDVKLCEGFNEVLRQCRIANGLM) folds into the CHCH domain. 2 consecutive short sequence motifs (cx9C motif) follow at residues 116 to 126 (CSLEIKQFLEC) and 136 to 146 (CEGFNEVLRQC). 2 disulfide bridges follow: cysteine 116–cysteine 146 and cysteine 126–cysteine 136.

In terms of assembly, interacts with RBPJ.

The protein resides in the nucleus. The protein localises to the mitochondrion. It localises to the mitochondrion intermembrane space. Functionally, transcription factor. Binds to the oxygen responsive element of COX4I2 and activates its transcription under hypoxia conditions (4% oxygen), as well as normoxia conditions (20% oxygen). In Mus musculus (Mouse), this protein is Coiled-coil-helix-coiled-coil-helix domain-containing protein 2 (Chchd2).